A 25-amino-acid chain; its full sequence is Caerin-2.2 (25 aa).

Belongs to the frog skin active peptide (FSAP) family. Caerin subfamily. Expressed by the skin parotoid and/or rostral glands.

The protein resides in the secreted. Antimicrobial peptide, that adopts an alpha helical conformation which can disrupt bacterial membranes. Each caerin displays a different antimicrobial specificity. This Ranoidea caerulea (Green tree frog) protein is Caerin-2.2.